The following is a 330-amino-acid chain: G-protein coupled bile acid receptor 1 (330 aa).

The Extracellular portion of the chain corresponds to 1–19 (MTPNSTGEVPGPIPRGALE). Residue N4 is glycosylated (N-linked (GlcNAc...) asparagine). Residues 20-40 (LSLALASLIIAANLLLALGIA) traverse the membrane as a helical segment. Topologically, residues 41 to 50 (CDRRLRSPPA) are cytoplasmic. Residues 51-71 (GCFFLSLLLAGLLTGLALPTL) form a helical membrane-spanning segment. The Extracellular portion of the chain corresponds to 72 to 85 (PGLWRQSHRGYWSC). C85 and C155 form a disulfide bridge. The chain crosses the membrane as a helical span at residues 86 to 106 (LLVYLAPNFSFLSLLANLLLV). The Cytoplasmic portion of the chain corresponds to 107-125 (HGERYVAVLRPLQPPGSIR). The helical transmembrane segment at 126-146 (LALLLTWTGPLLFASLPALGW) threads the bilayer. The Extracellular segment spans residues 147–169 (NHWGPEANCSSQTIFPAPYLYLE). N-linked (GlcNAc...) asparagine glycosylation is present at N154. A helical transmembrane segment spans residues 170-190 (VYGLLLPAVGAAALLSAHVLL). At 191–230 (AAHRQLQDIRRLERAVCRDAPSALARALTWRQARAQAGAT) the chain is on the cytoplasmic side. A helical transmembrane segment spans residues 231 to 251 (LLFGLCWGPYVATLFLSVLAY). The Extracellular portion of the chain corresponds to 252 to 261 (EQRPPLGPGT). Residues 262–282 (LLSLLSLGSASAAAVPVAMGL) form a helical membrane-spanning segment. At 283-330 (GDHRYTAPWRAAARRWLRGLRGRGSQASPGPSTAYHTSSQSSVDVDLN) the chain is on the cytoplasmic side. Positions 304–330 (GRGSQASPGPSTAYHTSSQSSVDVDLN) are disordered. Polar residues predominate over residues 307–330 (SQASPGPSTAYHTSSQSSVDVDLN).

Belongs to the G-protein coupled receptor 1 family. Expressed at high level in spleen. Expressed at lower level in thymus, heart, lung, liver, kidney, ileum, blood and adherent alveolar macrophage cells.

It is found in the cell membrane. In terms of biological role, receptor for bile acid. Bile-acid binding induces its internalization, activation of extracellular signal-regulated kinase and intracellular cAMP production. May be involved in the suppression of macrophage functions by bile acids. Involved in bile acid promoted GLP1R secretion. This chain is G-protein coupled bile acid receptor 1 (GPBAR1), found in Oryctolagus cuniculus (Rabbit).